The sequence spans 224 residues: LOB domain-containing protein 15 (224 aa).

In terms of domain architecture, LOB spans 44-145 (TPCAACKLLR…AELTAVRSEI (102 aa)). The segment at 171-224 (SGGVSVIAPPPQRPTTPPQPTTAHPPSPSSCVFSQPTTRDLEYGNIESENNYFG) is disordered. Over residues 178 to 198 (APPPQRPTTPPQPTTAHPPSP) the composition is skewed to pro residues.

This sequence belongs to the LOB domain-containing protein family. Expressed in young shoots, roots, stems, leaves and flowers.

The polypeptide is LOB domain-containing protein 15 (LBD15) (Arabidopsis thaliana (Mouse-ear cress)).